A 287-amino-acid polypeptide reads, in one-letter code: ATP synthase gamma chain (287 aa).

The protein belongs to the ATPase gamma chain family. In terms of assembly, F-type ATPases have 2 components, CF(1) - the catalytic core - and CF(0) - the membrane proton channel. CF(1) has five subunits: alpha(3), beta(3), gamma(1), delta(1), epsilon(1). CF(0) has three main subunits: a, b and c.

It localises to the cell inner membrane. In terms of biological role, produces ATP from ADP in the presence of a proton gradient across the membrane. The gamma chain is believed to be important in regulating ATPase activity and the flow of protons through the CF(0) complex. The sequence is that of ATP synthase gamma chain from Alkalilimnicola ehrlichii (strain ATCC BAA-1101 / DSM 17681 / MLHE-1).